A 410-amino-acid polypeptide reads, in one-letter code: LIMR family protein SELMODRAFT_432208 (410 aa).

The next 5 membrane-spanning stretches (helical) occupy residues 30 to 50 (LWWA…IFFY), 67 to 87 (LWVV…YAVI), 129 to 149 (VTLM…LTTL), 156 to 176 (ICLD…NTII), and 179 to 199 (ILFM…LIFA). A coiled-coil region spans residues 245–274 (RMFRKNVKKVQQELVFLEDDVEALNEAFPQ). 2 consecutive transmembrane segments (helical) span residues 288 to 308 (LVFG…IIVF) and 330 to 350 (GGLL…MSVI). Over residues 389–400 (PSSAMDSSSWSA) the composition is skewed to low complexity. Residues 389–410 (PSSAMDSSSWSADRPCRPWPWP) form a disordered region.

The protein belongs to the LIMR family.

It localises to the membrane. This is LIMR family protein SELMODRAFT_432208 from Selaginella moellendorffii (Spikemoss).